The following is a 301-amino-acid chain: ADP-ribosyl cyclase/cyclic ADP-ribose hydrolase 1 (301 aa).

At 1–21 the chain is on the cytoplasmic side; that stretch reads MANCEFSPVSGDKPCCRLSRR. Residues 22–43 traverse the membrane as a helical; Signal-anchor for type II membrane protein segment; sequence AQVCLGVCLLVLLILVVVVAVV. The Extracellular segment spans residues 44 to 301; sequence LPRWRQQWSG…PEDSSCLSGI (258 aa). 3 disulfide bridges follow: Cys-68–Cys-83, Cys-100–Cys-181, and Cys-161–Cys-174. Asn-101 is a glycosylation site (N-linked (GlcNAc...) asparagine). Cys-120 is an active-site residue. Asn-121 carries an N-linked (GlcNAc...) asparagine glycan. Cys-202 is a catalytic residue. Residues Asn-210 and Asn-220 are each glycosylated (N-linked (GlcNAc...) asparagine). 2 disulfide bridges follow: Cys-255/Cys-276 and Cys-288/Cys-297.

The protein belongs to the ADP-ribosyl cyclase family. Homodimer.

It is found in the cell surface. The protein resides in the membrane. The catalysed reaction is NAD(+) = cyclic ADP-beta-D-ribose + nicotinamide + H(+). The enzyme catalyses 2'-phospho-cyclic ADP-ribose + nicotinate = nicotinate-adenine dinucleotide phosphate. It catalyses the reaction NAD(+) + H2O = ADP-D-ribose + nicotinamide + H(+). It carries out the reaction nicotinate + NADP(+) = nicotinate-adenine dinucleotide phosphate + nicotinamide. ATP inhibits the cADPR hydrolyzing activity. Functionally, synthesizes cyclic ADP-ribose (cADPR), a second messenger for glucose-induced insulin secretion. Synthesizes the Ca(2+) mobilizer nicotinate-adenine dinucleotide phosphate, NAADP(+), from 2'-phospho-cADPR and nicotinic acid, as well as from NADP(+) and nicotinic acid. Also has cADPR hydrolase activity. This Macaca fascicularis (Crab-eating macaque) protein is ADP-ribosyl cyclase/cyclic ADP-ribose hydrolase 1 (CD38).